The following is a 359-amino-acid chain: 3-dehydroquinate synthase (359 aa).

Residues 71–76 (DGEAYK), 105–109 (GVIGD), 129–130 (TT), lysine 142, lysine 151, and 169–172 (TLGT) contribute to the NAD(+) site. Residues glutamate 184, histidine 247, and histidine 264 each coordinate Zn(2+).

It belongs to the sugar phosphate cyclases superfamily. Dehydroquinate synthase family. Co(2+) is required as a cofactor. The cofactor is Zn(2+). NAD(+) serves as cofactor.

It localises to the cytoplasm. The catalysed reaction is 7-phospho-2-dehydro-3-deoxy-D-arabino-heptonate = 3-dehydroquinate + phosphate. The protein operates within metabolic intermediate biosynthesis; chorismate biosynthesis; chorismate from D-erythrose 4-phosphate and phosphoenolpyruvate: step 2/7. Functionally, catalyzes the conversion of 3-deoxy-D-arabino-heptulosonate 7-phosphate (DAHP) to dehydroquinate (DHQ). The chain is 3-dehydroquinate synthase from Thiobacillus denitrificans (strain ATCC 25259 / T1).